The primary structure comprises 169 residues: Nucleoside diphosphate kinase 3-A (169 aa).

6 residues coordinate ADP: lysine 29, arginine 105, threonine 111, arginine 122, valine 129, and asparagine 132. The active-site Pros-phosphohistidine intermediate is histidine 135.

Belongs to the NDK family. Homohexamer. Mg(2+) is required as a cofactor.

Its subcellular location is the mitochondrion outer membrane. It is found in the cytoplasm. The protein resides in the cytoskeleton. The protein localises to the cilium basal body. The enzyme catalyses a 2'-deoxyribonucleoside 5'-diphosphate + ATP = a 2'-deoxyribonucleoside 5'-triphosphate + ADP. It catalyses the reaction a ribonucleoside 5'-diphosphate + ATP = a ribonucleoside 5'-triphosphate + ADP. Its function is as follows. Catalyzes the phosphorylation of ribonucleosides and deoxyribonucleoside diphosphates, other than ATP, into the corresponding triphosphates with ATP as the major phosphate donor. The ATP gamma phosphate is transferred to the nucleoside diphosphate beta phosphate via a ping-pong mechanism, using a phosphorylated active-site intermediate. Through the catalyzed exchange of gamma-phosphate between di- and triphosphonucleosides participates in regulation of intracellular nucleotide homeostasis. Required for ciliary function during renal development. In terms of biological role, independently of its kinase activity, facilitates mitochondrial tethering prior to membrane fusion through its direct membrane-binding and hexamerization. Implicated in repair of both single- and double-stranded breaks in DNA, independently of its kinase activity. This Xenopus laevis (African clawed frog) protein is Nucleoside diphosphate kinase 3-A.